We begin with the raw amino-acid sequence, 249 residues long: Pulmonary surfactant-associated protein A (249 aa).

The first 20 residues, 1–20, serve as a signal peptide directing secretion; it reads MLRWPLALTFLLLAVSGLEC. The Collagen-like domain maps to 28–100; that stretch reads ASPGIPGTPG…PGERGPPGLP (73 aa). A disordered region spans residues 29–102; it reads SPGIPGTPGS…ERGPPGLPAH (74 aa). 4-hydroxyproline occurs at positions 30, 33, 36, 42, 54, 57, 63, and 70. A compositionally biased stretch (basic and acidic residues) spans 42–51; the sequence is PGRDGRDGIK. The segment covering 84-93 has biased composition (basic and acidic residues); it reads ERGEKGEPGE. The C-type lectin domain occupies 133–249; the sequence is AVGEKVFSTN…QQYRLAICEF (117 aa). Disulfide bonds link Cys-155/Cys-247 and Cys-225/Cys-239. Asn-208 carries N-linked (GlcNAc...) asparagine glycosylation. Glu-216, Arg-218, Asn-235, and Asp-236 together coordinate Ca(2+).

This sequence belongs to the SFTPA family. As to quaternary structure, oligomeric complex of 6 set of homotrimers.

The protein localises to the secreted. It localises to the extracellular space. Its subcellular location is the extracellular matrix. It is found in the surface film. Functionally, in presence of calcium ions, it binds to surfactant phospholipids and contributes to lower the surface tension at the air-liquid interface in the alveoli of the mammalian lung and is essential for normal respiration. Enhances the expression of MYO18A/SP-R210 on alveolar macrophages. The polypeptide is Pulmonary surfactant-associated protein A (SFTPA1) (Sus scrofa (Pig)).